A 157-amino-acid chain; its full sequence is Ubiquitin-like protein 4A (157 aa).

Positions 1 to 76 constitute a Ubiquitin-like domain; it reads MQLTVKALQG…LNLVVKPLEK (76 aa). Residue lysine 48 forms a Glycyl lysine isopeptide (Lys-Gly) (interchain with G-Cter in ubiquitin) linkage. Position 90 is a phosphoserine (serine 90). The required and sufficient for interaction with BAG6 stretch occupies residues 96–138; it reads WQLISKVLARHFSAADASRVLEQLQRDYERSLSRLTLDDIERL.

As to quaternary structure, component of the BAG6/BAT3 complex, at least composed of BAG6, UBL4A and GET4/TRC35. Interacts with BAG6; the interaction is direct and required for UBL4A protein stability. Interacts with USP13; may be indirect via BAG6. In terms of processing, polyubiquitinated. Ubiquitination by AMFR and deubiquitination by USP13 may regulate the interaction between the BAG6/BAT3 complex and SGTA and therefore may regulate client proteins fate.

The protein localises to the cytoplasm. It is found in the cytosol. It localises to the nucleus. Its function is as follows. As part of a cytosolic protein quality control complex, the BAG6/BAT3 complex, maintains misfolded and hydrophobic patches-containing proteins in a soluble state and participates in their proper delivery to the endoplasmic reticulum or alternatively can promote their sorting to the proteasome where they undergo degradation. The BAG6/BAT3 complex is involved in the post-translational delivery of tail-anchored/type II transmembrane proteins to the endoplasmic reticulum membrane. Recruited to ribosomes, it interacts with the transmembrane region of newly synthesized tail-anchored proteins and together with SGTA and ASNA1 mediates their delivery to the endoplasmic reticulum. Client proteins that cannot be properly delivered to the endoplasmic reticulum are ubiquitinated and sorted to the proteasome. Similarly, the BAG6/BAT3 complex also functions as a sorting platform for proteins of the secretory pathway that are mislocalized to the cytosol either delivering them to the proteasome for degradation or to the endoplasmic reticulum. The BAG6/BAT3 complex also plays a role in the endoplasmic reticulum-associated degradation (ERAD), a quality control mechanism that eliminates unwanted proteins of the endoplasmic reticulum through their retrotranslocation to the cytosol and their targeting to the proteasome. It maintains these retrotranslocated proteins in an unfolded yet soluble state condition in the cytosol to ensure their proper delivery to the proteasome. This Homo sapiens (Human) protein is Ubiquitin-like protein 4A.